Here is a 560-residue protein sequence, read N- to C-terminus: MNIDVVQLLDQNPILLIFVVLAIGLAIGKIRFGNLQLGNSIGVLITSLIMGHLGFSFNAEALTIGFMLFIYCVGIEAGPNFFGIFFRDGKHYFILSMTVLVAAVSLTYGLSHYFGLDFGLSAGMMAGALTATPVLVGAQDALNSGLATIPRNMDFSLVLENLSVGYAMAYLIGLISMIMFAKLLPKLQKQNLSDSAQQIAQERGLGNSSQRKVYLPIIRAYRVGPELIDWTDGKNLRELGIYRQTGCYIERIRRNGILAHPDGDAILQEGDEIALVGFPDSHARLDPSFRNGKEVFDRNLLDLRIVEEEIVVKSDAIAGKRLSDLNLSEFGCFLNRVVRAQIEMPMDLDIVLAKGDVLQVSGEKSRVHGLAEKIGFISIHSQMADLLAFCSFFILGIMFGLVTMTFGQVSFSLGNAVGLLLSGITLGFLRANHPTFGYVPQGALNMVKDLGLMFFMVGIGLSAGGKMFEHLTQVGPQVIGLAFIVSVVPVVIAYLVGAYILKMNRALLFGAIIGARTCAPAMDVVNEYAKSTIPALGYAGTYAIANILMTLAGTILIILS.

The next 5 membrane-spanning stretches (helical) occupy residues 8 to 28 (LLDQ…LAIG), 37 to 57 (LGNS…GFSF), 66 to 86 (FMLF…GIFF), 91 to 111 (HYFI…YGLS), and 164 to 184 (VGYA…AKLL). 2 RCK C-terminal domains span residues 205–292 (LGNS…FRNG) and 293–376 (KEVF…KIGF). The next 6 membrane-spanning stretches (helical) occupy residues 386-406 (LLAF…TMTF), 409-429 (VSFS…LGFL), 443-463 (ALNM…GLSA), 478-498 (VIGL…LVGA), 506-526 (ALLF…DVVN), and 539-559 (AGTY…LIIL).

It belongs to the AAE transporter (TC 2.A.81) family. YbjL subfamily.

It is found in the cell membrane. This chain is Putative transport protein VP1232, found in Vibrio parahaemolyticus serotype O3:K6 (strain RIMD 2210633).